The sequence spans 898 residues: Metalloprotease StcE (898 aa).

A signal peptide spans 1–35 (MNTKMNERWRTPMKLKYLSCTILAPLAIGVFSATA). Positions 296 to 551 (ELLLHTIDIG…QRFFENKAVF (256 aa)) constitute a Peptidase M66 domain. Histidine 446 lines the Zn(2+) pocket. Glutamate 447 is a catalytic residue. Zn(2+) contacts are provided by histidine 450 and histidine 456.

It depends on Zn(2+) as a cofactor.

It is found in the secreted. With respect to regulation, inhibited by divalent cation chelators such as BPS and EDTA. Virulence factor that contributes to intimate adherence of enterohemorrhagic E.coli (EHEC) O157:H7 to host cells. Is able to cleave the secreted human mucin 7 (MUC7) and the glycoprotein 340 (DMBT1/GP340). Also cleaves human C1 inhibitor (SERPING1), a regulator of multiple inflammatory pathways, and binds and localizes it to bacterial and host cell surfaces, protecting them from complement-mediated lysis. Therefore, the current model proposes two roles for StcE during infection: it acts first as a mucinase, allowing passage of EHEC through the oral cavity by cleaving the salivary glycoproteins that are responsible for bacterial aggregation. Similarly, in the colon, StcE cleaves the glycoproteins that protect the intestinal epithelial surface, allowing EHEC to come into close contact with host cell membranes. Secondly, it acts as an anti-inflammatory agent by localizing SERPING1 to cell membranes. This Escherichia coli O157:H7 protein is Metalloprotease StcE (stcE).